A 385-amino-acid polypeptide reads, in one-letter code: Putative 8-amino-7-oxononanoate synthase (385 aa).

R22 is a binding site for substrate. 109–110 (GY) serves as a coordination point for pyridoxal 5'-phosphate. Residue H134 coordinates substrate. Pyridoxal 5'-phosphate contacts are provided by residues S182, 207-210 (DEAH), and 238-241 (TLSK). At K241 the chain carries N6-(pyridoxal phosphate)lysine. T353 provides a ligand contact to substrate.

It belongs to the class-II pyridoxal-phosphate-dependent aminotransferase family. BioF subfamily. As to quaternary structure, homodimer. Pyridoxal 5'-phosphate serves as cofactor.

The catalysed reaction is 6-carboxyhexanoyl-[ACP] + L-alanine + H(+) = (8S)-8-amino-7-oxononanoate + holo-[ACP] + CO2. Its pathway is cofactor biosynthesis; biotin biosynthesis. In terms of biological role, catalyzes the decarboxylative condensation of pimeloyl-[acyl-carrier protein] and L-alanine to produce 8-amino-7-oxononanoate (AON), [acyl-carrier protein], and carbon dioxide. This Microcystis aeruginosa (strain NIES-843 / IAM M-2473) protein is Putative 8-amino-7-oxononanoate synthase (bioF).